Reading from the N-terminus, the 413-residue chain is NPL4-like protein 1 (413 aa).

Ser-104 carries the post-translational modification Phosphoserine. One can recognise an MPN domain in the interval 131-272; that stretch reads SVSFDRDCAN…ADVHFEPFQM (142 aa).

The protein belongs to the NPL4 family.

It participates in protein degradation; proteasomal ubiquitin-dependent pathway. In terms of biological role, may be part of a complex that binds ubiquitinated proteins and that is necessary for the export of misfolded proteins from the ER to the cytoplasm, where they are degraded by the proteasome. The protein is NPL4-like protein 1 of Arabidopsis thaliana (Mouse-ear cress).